The following is a 139-amino-acid chain: MLSPKKTRFRKQHRGRMKGKACRGNKICFGKYALQALEPAWITSRQIEAGRRAMSRNVRRGGQIWIRIFPDKPVTVRPTETRMGSGKGSPEYWVAVIKPGKILYEMGGVAENIARKAISLAASKMPIRTQFILLEESHN.

It belongs to the universal ribosomal protein uL16 family. Part of the 50S ribosomal subunit.

It is found in the plastid. The protein resides in the chloroplast. This chain is Large ribosomal subunit protein uL16c, found in Cicer arietinum (Chickpea).